Here is a 584-residue protein sequence, read N- to C-terminus: Arginine--tRNA ligase (584 aa).

Positions 126-136 (PNIAKEMHVGH) match the 'HIGH' region motif.

It belongs to the class-I aminoacyl-tRNA synthetase family. As to quaternary structure, monomer.

Its subcellular location is the cytoplasm. It catalyses the reaction tRNA(Arg) + L-arginine + ATP = L-arginyl-tRNA(Arg) + AMP + diphosphate. This chain is Arginine--tRNA ligase, found in Nostoc punctiforme (strain ATCC 29133 / PCC 73102).